The chain runs to 40 residues: Cytolysin SmT-1 (40 aa).

Positions 3-12 (ALAGTIIAGA) are plays an important role in the hemolytic activity. The segment at 11–30 (GASLGFQILDKVLGELGKVS) is N-terminal region.

This sequence belongs to the actinoporin family. Sea anemone subfamily. In terms of assembly, octamer or nonamer in membranes. Monomer in the soluble state.

The protein resides in the secreted. It is found in the nematocyst. Its subcellular location is the target cell membrane. Its function is as follows. Pore-forming protein that forms cations-selective hydrophilic pores of around 1 nm and causes cardiac stimulation and cytolysis. Pore formation is a multi-step process that involves specific recognition of membrane sphingomyelin (but neither cholesterol nor phosphatidylcholine) using aromatic rich region and adjacent phosphocholine (POC) binding site, firm binding to the membrane (mainly driven by hydrophobic interactions) accompanied by the transfer of the N-terminal region to the lipid-water interface and finally pore formation after oligomerization of monomers. This toxin shows hemolytic activities. The polypeptide is Cytolysin SmT-1 (Stichodactyla mertensii (Merten's carpet sea anemone)).